Reading from the N-terminus, the 507-residue chain is ATP synthase subunit alpha, chloroplastic (507 aa).

Residue 170–177 (GDRQTGKT) participates in ATP binding.

Belongs to the ATPase alpha/beta chains family. In terms of assembly, F-type ATPases have 2 components, CF(1) - the catalytic core - and CF(0) - the membrane proton channel. CF(1) has five subunits: alpha(3), beta(3), gamma(1), delta(1), epsilon(1). CF(0) has four main subunits: a, b, b' and c.

It localises to the plastid. The protein resides in the chloroplast thylakoid membrane. It carries out the reaction ATP + H2O + 4 H(+)(in) = ADP + phosphate + 5 H(+)(out). In terms of biological role, produces ATP from ADP in the presence of a proton gradient across the membrane. The alpha chain is a regulatory subunit. This chain is ATP synthase subunit alpha, chloroplastic, found in Amborella trichopoda.